The following is a 189-amino-acid chain: Inosine triphosphate pyrophosphatase (189 aa).

14-19 (TGNQNK) provides a ligand contact to ITP. Glu42 is a Mg(2+) binding site. Residues Lys54, 70–71 (DT), Lys87, 146–149 (FGWD), Lys167, and 172–173 (HR) contribute to the ITP site.

Belongs to the HAM1 NTPase family. In terms of assembly, homodimer. It depends on Mg(2+) as a cofactor. The cofactor is Mn(2+).

The protein localises to the cytoplasm. It localises to the nucleus. The enzyme catalyses ITP + H2O = IMP + diphosphate + H(+). The catalysed reaction is dITP + H2O = dIMP + diphosphate + H(+). It catalyses the reaction XTP + H2O = XMP + diphosphate + H(+). Functionally, pyrophosphatase that hydrolyzes non-canonical purine nucleotides such as inosine triphosphate (ITP), deoxyinosine triphosphate (dITP) or xanthosine 5'-triphosphate (XTP) to their respective monophosphate derivatives. The enzyme does not distinguish between the deoxy- and ribose forms. Probably excludes non-canonical purines from RNA and DNA precursor pools, thus preventing their incorporation into RNA and DNA and avoiding chromosomal lesions. The polypeptide is Inosine triphosphate pyrophosphatase (Pyricularia oryzae (strain 70-15 / ATCC MYA-4617 / FGSC 8958) (Rice blast fungus)).